The primary structure comprises 442 residues: 3-oxoacyl-[acyl-carrier-protein] synthase homolog (442 aa).

A Ketosynthase family 3 (KS3) domain is found at 2-438 (SRRVVITGLG…GVNTSLLFKK (437 aa)). Residues Cys-187, His-322, and His-362 each act as for beta-ketoacyl synthase activity in the active site.

Belongs to the thiolase-like superfamily. Beta-ketoacyl-ACP synthases family.

It is found in the mitochondrion. The enzyme catalyses a fatty acyl-[ACP] + malonyl-[ACP] + H(+) = a 3-oxoacyl-[ACP] + holo-[ACP] + CO2. Functionally, possibly involved in the synthesis of a specialized molecule, probably related to a fatty acid, which is essential for mitochondrial respiration. Is essential for oxygen uptake and the presence of cytochromes A and B. This is 3-oxoacyl-[acyl-carrier-protein] synthase homolog (CEM1) from Saccharomyces cerevisiae (strain ATCC 204508 / S288c) (Baker's yeast).